Here is a 360-residue protein sequence, read N- to C-terminus: Photosystem II protein D1 (360 aa).

3 helical membrane-spanning segments follow: residues 29-46, 118-133, and 142-156; these read YIGW…TATT, HFLL…QWEL, and WICV…AATA. H118 serves as a coordination point for chlorophyll a. Y126 contacts pheophytin a. [CaMn4O5] cluster contacts are provided by D170 and E189. A helical membrane pass occupies residues 197–218; it reads FHMLGVAGVFGGSLFSAMHGSL. Chlorophyll a is bound at residue H198. A quinone is bound by residues H215 and 264–265; that span reads SF. A Fe cation-binding site is contributed by H215. H272 serves as a coordination point for Fe cation. Residues 274–288 form a helical membrane-spanning segment; sequence FLGAWPVIGIWFTAM. The [CaMn4O5] cluster site is built by H332, E333, D342, and A344. A propeptide spanning residues 345–360 is cleaved from the precursor; it reads SGEQAPVALIAPAING.

The protein belongs to the reaction center PufL/M/PsbA/D family. In terms of assembly, PSII is composed of 1 copy each of membrane proteins PsbA, PsbB, PsbC, PsbD, PsbE, PsbF, PsbH, PsbI, PsbJ, PsbK, PsbL, PsbM, PsbT, PsbX, PsbY, PsbZ, Psb30/Ycf12, peripheral proteins PsbO, CyanoQ (PsbQ), PsbU, PsbV and a large number of cofactors. It forms dimeric complexes. Requires The D1/D2 heterodimer binds P680, chlorophylls that are the primary electron donor of PSII, and subsequent electron acceptors. It shares a non-heme iron and each subunit binds pheophytin, quinone, additional chlorophylls, carotenoids and lipids. D1 provides most of the ligands for the Mn4-Ca-O5 cluster of the oxygen-evolving complex (OEC). There is also a Cl(-1) ion associated with D1 and D2, which is required for oxygen evolution. The PSII complex binds additional chlorophylls, carotenoids and specific lipids. as cofactor. Post-translationally, tyr-161 forms a radical intermediate that is referred to as redox-active TyrZ, YZ or Y-Z. C-terminally processed by CtpA; processing is essential to allow assembly of the oxygen-evolving complex and thus photosynthetic growth.

The protein resides in the cellular thylakoid membrane. It catalyses the reaction 2 a plastoquinone + 4 hnu + 2 H2O = 2 a plastoquinol + O2. Photosystem II (PSII) is a light-driven water:plastoquinone oxidoreductase that uses light energy to abstract electrons from H(2)O, generating O(2) and a proton gradient subsequently used for ATP formation. It consists of a core antenna complex that captures photons, and an electron transfer chain that converts photonic excitation into a charge separation. The D1/D2 (PsbA/PsbD) reaction center heterodimer binds P680, the primary electron donor of PSII as well as several subsequent electron acceptors. The protein is Photosystem II protein D1 of Microcystis aeruginosa (strain NIES-843 / IAM M-2473).